The chain runs to 229 residues: Deleted in azoospermia-like (229 aa).

The 82-residue stretch at 47-128 (NTLFVGGIDM…PAIMKERSSR (82 aa)) folds into the RRM domain. Residues 172–198 (PYSYSSPPGIMVPQVPMNYAQTTYAYQ) enclose the DAZ domain.

It belongs to the RRM DAZ family. Testis and ovary specific. In ovary, it is localized in the cortex of oocytes. At the onset of embryogenesis, maternal product is located at the vegetal pole, before migrating toward blastomeres through cytoplasmic streams as early embryogenesis proceededs.

The protein resides in the cytoplasm. Its function is as follows. RNA-binding protein involved in gametogenesis in both males and females. Acts by binding to the 3'-UTR of mRNA, specifically recognizing GUU triplets, and promoting the translation of key transcripts. Establishes oocyte polarity through interaction with Bucky ball (BUC). Interacts with Bucky ball (BUC) mRNA to mediate Balbiani body formation and oocyte polarity during early oogenesis. This chain is Deleted in azoospermia-like (dazl), found in Danio rerio (Zebrafish).